A 106-amino-acid chain; its full sequence is Probable insulin-like peptide beta-type 1 (106 aa).

The N-terminal stretch at 1–19 (MFSFFTYFLLSALLLSASC) is a signal peptide. The propeptide at 20-51 (RQPSMDTSKADRILREIEMETELENQLSRARR) is removed; by convertase egl-3. 4 cysteine pairs are disulfide-bonded: Cys60–Cys89, Cys72–Cys102, Cys76–Cys103, and Cys88–Cys93.

Belongs to the insulin family. As to expression, expressed by ASI and ASJ sensory neurons and weakly by ventral cord motor neurons.

The protein resides in the secreted. Probable insulin-like peptide which negatively regulates synapse development at the neuromuscular junctions. Probably acts as a daf-2/InsR agonist ligand to prevent dauer formation under optimal environmental conditions. This chain is Probable insulin-like peptide beta-type 1 (ins-4), found in Caenorhabditis elegans.